Consider the following 234-residue polypeptide: Sugar fermentation stimulation protein A (234 aa).

A DNA-binding region (H-T-H motif) is located at residues 201-220 (LLSEAQNKGVEVLAYKAELS).

The protein belongs to the SfsA family.

Its function is as follows. Binds to DNA non-specifically. Could be a regulatory factor involved in maltose metabolism. In Salmonella gallinarum (strain 287/91 / NCTC 13346), this protein is Sugar fermentation stimulation protein A.